The sequence spans 425 residues: Histone-binding protein RBBP7 (425 aa).

At Ala2 the chain carries N-acetylalanine. At Ser3 the chain carries Phosphoserine. Lys4 is modified (N6-acetyllysine; alternate). Lys4 is covalently cross-linked (Glycyl lysine isopeptide (Lys-Gly) (interchain with G-Cter in SUMO2); alternate). Lys4 participates in a covalent cross-link: Glycyl lysine isopeptide (Lys-Gly) (interchain with G-Cter in ubiquitin); alternate. Thr10 carries the phosphothreonine modification. Residues Glu13 and Ser95 each carry the phosphoserine modification. WD repeat units lie at residues 47–122, 128–173, 181–217, 228–269, 275–312, 318–369, and 376–403; these read QWLP…KINH, RARY…LRLR, GLSW…KIVD, VVED…HLVD, VNCL…LHTF, EIFQ…LFIH, and ISDF…IWQM. Residue Lys101 forms a Glycyl lysine isopeptide (Lys-Gly) (interchain with G-Cter in SUMO2) linkage. Lys119 is modified (N6-acetyllysine). Lys155 is covalently cross-linked (Glycyl lysine isopeptide (Lys-Gly) (interchain with G-Cter in SUMO2)). Lys159 carries the post-translational modification N6-acetyllysine; alternate. A Glycyl lysine isopeptide (Lys-Gly) (interchain with G-Cter in SUMO2); alternate cross-link involves residue Lys159. A Phosphoserine modification is found at Ser354.

The protein belongs to the WD repeat RBAP46/RBAP48/MSI1 family. In terms of assembly, binds directly to helix 1 of the histone fold of histone H4, a region that is not accessible when H4 is in chromatin. Subunit of the type B histone acetyltransferase (HAT) complex, composed of RBBP7 and HAT1. Subunit of the core histone deacetylase (HDAC) complex, which is composed of HDAC1, HDAC2, RBBP4 and RBBP7. The core HDAC complex associates with SIN3A, ARID4B/SAP180, SAP18, SAP30, SAP130, SUDS3/SAP45 and possibly ARID4A/RBP1 and ING1 to form the SIN3 HDAC complex. Component of the nucleosome remodeling and deacetylase (NuRD) repressor complex, composed of core proteins MTA1, MTA2, MTA3, RBBP4, RBBP7, HDAC1, HDAC2, MBD2, MBD3, and peripherally associated proteins CDK2AP1, CDK2AP2, GATAD2A, GATAD2B, CHD3, CHD4 and CHD5. The exact stoichiometry of the NuRD complex is unknown, and some subunits such as MBD2 and MBD3, GATAD2A and GATAD2B, and CHD3, CHD4 and CHD5 define mutually exclusive NuRD complexes. The NuRD complex may interact with MBD3L1. The NuRD complex may interact with MBD3L2. Subunit of the PRC2/EED-EZH2 complex, which is composed of at least EED, EZH2, RBBP4, RBBP7 and SUZ12. The PRC2/EED-EZH2 complex may also associate with HDAC1. Component of the NURF-1 ISWI chromatin remodeling complex (also called the nucleosome-remodeling factor (NURF) complex) at least composed of SMARCA1 (isoform 2), BPTF, RBBP4 and RBBP7. Within the complex interacts with isoform 2 of SMARCA1. Component of the BPFT-SMARCA1 complex at least composed of SMARCA1 (isoform 1), BPFT, RBBP4 and RBBP7; the complex is catalytically inactive and does not remodel chromatin. Within the complex interacts with isoform 1 of SMARCA1. Interacts with BRCA1. Interacts with CDK2AP1. Interacts with CENPA. Interacts with CHD3. Interacts with CHD4. Interacts with CREBBP, and this interaction may be enhanced by the binding of phosphorylated CREB1 to CREBBP. Interacts with HDAC7. Interacts with MTA1. Interacts with PWWP2B. Interacts with RB1 (via viral protein-binding domain). Interacts with SUV39H1.

The protein localises to the nucleus. Functionally, core histone-binding subunit that may target chromatin remodeling factors, histone acetyltransferases and histone deacetylases to their histone substrates in a manner that is regulated by nucleosomal DNA. Component of several complexes which regulate chromatin metabolism. These include the type B histone acetyltransferase (HAT) complex, which is required for chromatin assembly following DNA replication; the core histone deacetylase (HDAC) complex, which promotes histone deacetylation and consequent transcriptional repression; the nucleosome remodeling and histone deacetylase complex (the NuRD complex), which promotes transcriptional repression by histone deacetylation and nucleosome remodeling; and the PRC2/EED-EZH2 complex, which promotes repression of homeotic genes during development; and the NURF (nucleosome remodeling factor) complex. In Homo sapiens (Human), this protein is Histone-binding protein RBBP7 (RBBP7).